A 339-amino-acid chain; its full sequence is MRVYYDRDADLNLIKGKKVVIVGYGSQGHAHALNLKDSGVKEIAIALRKGSASAKKAEGAGFKVMEVAEAAKWGDLVMMLTPDELQGDIYREHLHDNMKKGAALIFAHGLNVHFNLLDPRADLDVLMIAPKGPGHTVRAEYQRGGGVPCLIAVAKDSSGNAHDLGLSYASAIGGGRAGIIETTFREECETDLFGEQAVLCGGLVELIKNGFETLVEAGYAPEMAYFECLHEVKLIVDLIYEGGIANMNYSISNTAEYGEYVTGPRIVTAETKKEMKRVLDDIQSGKFARDWMLENKVNQTSFKATRARLAAHPIEEVGARLRDMMPWIKKAAMVDKAKN.

Residues 1–182 (MRVYYDRDAD…GGGRAGIIET (182 aa)) enclose the KARI N-terminal Rossmann domain. NADP(+) contacts are provided by residues 24 to 27 (YGSQ), Arg-48, Ser-51, Ser-53, and 83 to 86 (DELQ). The active site involves His-108. Gly-134 lines the NADP(+) pocket. The region spanning 183–328 (TFREECETDL…ARLRDMMPWI (146 aa)) is the KARI C-terminal knotted domain. The Mg(2+) site is built by Asp-191, Glu-195, Glu-227, and Glu-231. Residue Ser-252 coordinates substrate.

The protein belongs to the ketol-acid reductoisomerase family. Mg(2+) is required as a cofactor.

It catalyses the reaction (2R)-2,3-dihydroxy-3-methylbutanoate + NADP(+) = (2S)-2-acetolactate + NADPH + H(+). The enzyme catalyses (2R,3R)-2,3-dihydroxy-3-methylpentanoate + NADP(+) = (S)-2-ethyl-2-hydroxy-3-oxobutanoate + NADPH + H(+). Its pathway is amino-acid biosynthesis; L-isoleucine biosynthesis; L-isoleucine from 2-oxobutanoate: step 2/4. It participates in amino-acid biosynthesis; L-valine biosynthesis; L-valine from pyruvate: step 2/4. Involved in the biosynthesis of branched-chain amino acids (BCAA). Catalyzes an alkyl-migration followed by a ketol-acid reduction of (S)-2-acetolactate (S2AL) to yield (R)-2,3-dihydroxy-isovalerate. In the isomerase reaction, S2AL is rearranged via a Mg-dependent methyl migration to produce 3-hydroxy-3-methyl-2-ketobutyrate (HMKB). In the reductase reaction, this 2-ketoacid undergoes a metal-dependent reduction by NADPH to yield (R)-2,3-dihydroxy-isovalerate. The sequence is that of Ketol-acid reductoisomerase (NADP(+)) from Nitrobacter winogradskyi (strain ATCC 25391 / DSM 10237 / CIP 104748 / NCIMB 11846 / Nb-255).